An 840-amino-acid polypeptide reads, in one-letter code: Phosphatidylglycerol lysyltransferase (840 aa).

The Cytoplasmic portion of the chain corresponds to 1-8 (MTQELKSK). The helical transmembrane segment at 9 to 29 (LLSFFKFIFATALFIFVIFTL) threads the bilayer. Over 30–52 (YRELSHINFKETFIQFGKINRLW) the chain is Extracellular. The chain crosses the membrane as a helical span at residues 53 to 73 (LVLLFAGGGLSLILLSLYDII). The Cytoplasmic segment spans residues 74–89 (LVKALKLKMPLIRVFR). The helical transmembrane segment at 90-110 (VSYIINALNSIIGFGGFIGAG) threads the bilayer. Topologically, residues 111–129 (VRAFVYKNYTNDTKKLVQY) are extracellular. A helical transmembrane segment spans residues 130 to 150 (ISIILVSMLTGLSLLSILVVL). The Cytoplasmic portion of the chain corresponds to 151 to 161 (RIFNASHMIDE). The chain crosses the membrane as a helical span at residues 162-182 (ISWVRWILYIVALFLPIFIFY). The Extracellular segment spans residues 183–200 (TVARPVDRNNRYMGVYCT). The chain crosses the membrane as a helical span at residues 201–221 (VVSCVEWMAAATVLYFAALIV). The Cytoplasmic portion of the chain corresponds to 222 to 229 (DIHISFMT). Residues 230-250 (FVGIFVIAALSGLVSFIPGGF) traverse the membrane as a helical segment. Over 251–270 (GAFDLVVLLGLKSLGISEEK) the chain is Extracellular. The helical transmembrane segment at 271–291 (ILLALVLYRFAYYFVPVMIAL) threads the bilayer. The Cytoplasmic segment spans residues 292–337 (ILSSFEFGNTAKKYLDNSKYFIPVKDFTSFLRSYQKDILAKVPSFS). Residues 338–358 (LAILIFLTSIIFFINNLTIVY) form a helical membrane-spanning segment. Residues 359–366 (DGLYDGNH) lie on the Extracellular side of the membrane. Residues 367-387 (FAYYIALAVQTSACLLLILNV) traverse the membrane as a helical segment. Over 388–392 (RGIYK) the chain is Cytoplasmic. Residues 393-413 (GSRRAIIYAFISIILIASATI) traverse the membrane as a helical segment. The Extracellular portion of the chain corresponds to 414 to 415 (YT). The helical transmembrane segment at 416-436 (YASFLLLSWLIIIFVLLILAY) threads the bilayer. Topologically, residues 437–450 (QRAQVLKRPLRFKK) are cytoplasmic. A helical transmembrane segment spans residues 451 to 471 (LAVMLLLSIFILYLNHILISG). At 472–489 (TLYALDVYHIEIDTSLLR) the chain is on the extracellular side. Residues 490–510 (YYFWMTIVIIMLLVGVIAWLF) form a helical membrane-spanning segment. At 511-840 (DYKYKCPHHS…LKVMRVIRHK (330 aa)) the chain is on the cytoplasmic side.

The protein belongs to the LPG synthase family.

The protein resides in the cell membrane. It catalyses the reaction L-lysyl-tRNA(Lys) + a 1,2-diacyl-sn-glycero-3-phospho-(1'-sn-glycerol) = a 1,2-diacyl-sn-glycero-3-phospho-1'-(3'-O-L-lysyl)-sn-glycerol + tRNA(Lys). In terms of biological role, catalyzes the transfer of a lysyl group from L-lysyl-tRNA(Lys) to membrane-bound phosphatidylglycerol (PG), which produces lysylphosphatidylglycerol (LPG), a major component of the bacterial membrane with a positive net charge. LPG synthesis contributes to bacterial virulence as it is involved in the resistance mechanism against cationic antimicrobial peptides (CAMP) produces by the host's immune system (defensins, cathelicidins) and by the competing microorganisms (bacteriocins). In fact, the modification of anionic phosphatidylglycerol with positively charged L-lysine results in repulsion of the peptides. This chain is Phosphatidylglycerol lysyltransferase (mprF), found in Staphylococcus epidermidis (strain ATCC 12228 / FDA PCI 1200).